Consider the following 457-residue polypeptide: ATP synthase subunit beta (457 aa).

An ATP-binding site is contributed by 147 to 154; it reads GGAGVGKT.

Belongs to the ATPase alpha/beta chains family. As to quaternary structure, F-type ATPases have 2 components, CF(1) - the catalytic core - and CF(0) - the membrane proton channel. CF(1) has five subunits: alpha(3), beta(3), gamma(1), delta(1), epsilon(1). CF(0) has three main subunits: a(1), b(2) and c(9-12). The alpha and beta chains form an alternating ring which encloses part of the gamma chain. CF(1) is attached to CF(0) by a central stalk formed by the gamma and epsilon chains, while a peripheral stalk is formed by the delta and b chains.

It is found in the cell inner membrane. The enzyme catalyses ATP + H2O + 4 H(+)(in) = ADP + phosphate + 5 H(+)(out). Produces ATP from ADP in the presence of a proton gradient across the membrane. The catalytic sites are hosted primarily by the beta subunits. This is ATP synthase subunit beta from Pasteurella multocida (strain Pm70).